The following is a 432-amino-acid chain: Phosphomethylpyrimidine synthase (432 aa).

Substrate-binding positions include Asn-66, Met-95, Tyr-124, His-163, 185–187, 226–229, and Glu-265; these read SRG and DGLR. Residue His-269 coordinates Zn(2+). Substrate is bound at residue Tyr-292. Position 333 (His-333) interacts with Zn(2+). The [4Fe-4S] cluster site is built by Cys-409, Cys-412, and Cys-416.

Belongs to the ThiC family. It depends on [4Fe-4S] cluster as a cofactor.

It carries out the reaction 5-amino-1-(5-phospho-beta-D-ribosyl)imidazole + S-adenosyl-L-methionine = 4-amino-2-methyl-5-(phosphooxymethyl)pyrimidine + CO + 5'-deoxyadenosine + formate + L-methionine + 3 H(+). The protein operates within cofactor biosynthesis; thiamine diphosphate biosynthesis. Functionally, catalyzes the synthesis of the hydroxymethylpyrimidine phosphate (HMP-P) moiety of thiamine from aminoimidazole ribotide (AIR) in a radical S-adenosyl-L-methionine (SAM)-dependent reaction. This Desulfitobacterium hafniense (strain DSM 10664 / DCB-2) protein is Phosphomethylpyrimidine synthase.